Here is a 544-residue protein sequence, read N- to C-terminus: Chaperonin GroEL (544 aa).

ATP-binding positions include 30-33 (TLGP), Lys-51, 87-91 (DGTTT), Gly-415, and Asp-495.

The protein belongs to the chaperonin (HSP60) family. Forms a cylinder of 14 subunits composed of two heptameric rings stacked back-to-back. Interacts with the co-chaperonin GroES.

It is found in the cytoplasm. It catalyses the reaction ATP + H2O + a folded polypeptide = ADP + phosphate + an unfolded polypeptide.. In terms of biological role, together with its co-chaperonin GroES, plays an essential role in assisting protein folding. The GroEL-GroES system forms a nano-cage that allows encapsulation of the non-native substrate proteins and provides a physical environment optimized to promote and accelerate protein folding. This is Chaperonin GroEL from Agrobacterium fabrum (strain C58 / ATCC 33970) (Agrobacterium tumefaciens (strain C58)).